The following is an 84-amino-acid chain: Cell division topological specificity factor (84 aa).

Belongs to the MinE family.

Its function is as follows. Prevents the cell division inhibition by proteins MinC and MinD at internal division sites while permitting inhibition at polar sites. This ensures cell division at the proper site by restricting the formation of a division septum at the midpoint of the long axis of the cell. This Azotobacter vinelandii (strain DJ / ATCC BAA-1303) protein is Cell division topological specificity factor.